Consider the following 329-residue polypeptide: 4-hydroxythreonine-4-phosphate dehydrogenase (329 aa).

Residues His-136 and Thr-137 each coordinate substrate. Positions 166, 211, and 266 each coordinate a divalent metal cation. Substrate is bound by residues Lys-274, Asn-283, and Arg-292.

The protein belongs to the PdxA family. As to quaternary structure, homodimer. The cofactor is Zn(2+). Mg(2+) serves as cofactor. It depends on Co(2+) as a cofactor.

It localises to the cytoplasm. The enzyme catalyses 4-(phosphooxy)-L-threonine + NAD(+) = 3-amino-2-oxopropyl phosphate + CO2 + NADH. It participates in cofactor biosynthesis; pyridoxine 5'-phosphate biosynthesis; pyridoxine 5'-phosphate from D-erythrose 4-phosphate: step 4/5. In terms of biological role, catalyzes the NAD(P)-dependent oxidation of 4-(phosphooxy)-L-threonine (HTP) into 2-amino-3-oxo-4-(phosphooxy)butyric acid which spontaneously decarboxylates to form 3-amino-2-oxopropyl phosphate (AHAP). This Shigella flexneri serotype 5b (strain 8401) protein is 4-hydroxythreonine-4-phosphate dehydrogenase.